Consider the following 382-residue polypeptide: Neuropeptide Y receptor type 1 (382 aa).

Residues 1–33 (MNSTLFSRVENYSVHYNVSENSPFLAFENDDCH) lie on the Extracellular side of the membrane. N-linked (GlcNAc...) asparagine glycosylation is found at N2, N11, and N17. A helical membrane pass occupies residues 34 to 54 (LPLAVIFTLALAYGAVIILGV). Residues 55–75 (SGNLALIIIILKQKEMRNVTN) are Cytoplasmic-facing. A helical transmembrane segment spans residues 76–96 (ILIVNLSFSDLLVAVMCLPFT). The Extracellular segment spans residues 97 to 115 (FVYTLMDHWVFGETMCKLN). C112 and C197 are disulfide-bonded. Residues 116–136 (PFVQCVSITVSIFSLVLIAVE) traverse the membrane as a helical segment. The Cytoplasmic portion of the chain corresponds to 137-153 (RHQLIINPRGWRPNNRH). The chain crosses the membrane as a helical span at residues 154–174 (AYIGITVIWVLAVASSLPFVI). The Extracellular segment spans residues 175 to 210 (YQILTDEPFQNVSLAAFKDKYVCFDKFPSDSHRLSY). Residues 211–231 (TTLLLVLQYFGPLCFIFICYF) traverse the membrane as a helical segment. Residues 232-259 (KIYIRLKRRNNMMDKIRDSKYRSSETKR) are Cytoplasmic-facing. Residues 260–280 (INVMLLSIVVAFAVCWLPLTI) traverse the membrane as a helical segment. Topologically, residues 281-298 (FNTVFDWNHQIIATCNHN) are extracellular. A helical transmembrane segment spans residues 299-319 (LLFLLCHLTAMISTCVNPIFY). At 320 to 382 (GFLNKNFQRD…KISMNDNEKI (63 aa)) the chain is on the cytoplasmic side. C337 is lipidated: S-palmitoyl cysteine. 2 positions are modified to phosphoserine: S367 and S375.

The protein belongs to the G-protein coupled receptor 1 family. Brain.

It is found in the cell membrane. Receptor for neuropeptide Y and peptide YY. The chain is Neuropeptide Y receptor type 1 (Npy1r) from Rattus norvegicus (Rat).